Reading from the N-terminus, the 374-residue chain is Queuine tRNA-ribosyltransferase (374 aa).

The active-site Proton acceptor is the Asp91. Substrate contacts are provided by residues Asp91–Tyr95, Asp145, Gln189, and Gly216. The interval Gly247–Asp253 is RNA binding. Residue Asp266 is the Nucleophile of the active site. The interval Thr271–Arg275 is RNA binding; important for wobble base 34 recognition. Residues Cys304, Cys306, Cys309, and His335 each contribute to the Zn(2+) site.

The protein belongs to the queuine tRNA-ribosyltransferase family. In terms of assembly, homodimer. Within each dimer, one monomer is responsible for RNA recognition and catalysis, while the other monomer binds to the replacement base PreQ1. Requires Zn(2+) as cofactor.

It carries out the reaction 7-aminomethyl-7-carbaguanine + guanosine(34) in tRNA = 7-aminomethyl-7-carbaguanosine(34) in tRNA + guanine. It functions in the pathway tRNA modification; tRNA-queuosine biosynthesis. Its function is as follows. Catalyzes the base-exchange of a guanine (G) residue with the queuine precursor 7-aminomethyl-7-deazaguanine (PreQ1) at position 34 (anticodon wobble position) in tRNAs with GU(N) anticodons (tRNA-Asp, -Asn, -His and -Tyr). Catalysis occurs through a double-displacement mechanism. The nucleophile active site attacks the C1' of nucleotide 34 to detach the guanine base from the RNA, forming a covalent enzyme-RNA intermediate. The proton acceptor active site deprotonates the incoming PreQ1, allowing a nucleophilic attack on the C1' of the ribose to form the product. After dissociation, two additional enzymatic reactions on the tRNA convert PreQ1 to queuine (Q), resulting in the hypermodified nucleoside queuosine (7-(((4,5-cis-dihydroxy-2-cyclopenten-1-yl)amino)methyl)-7-deazaguanosine). This is Queuine tRNA-ribosyltransferase from Leptospira interrogans serogroup Icterohaemorrhagiae serovar Lai (strain 56601).